A 1772-amino-acid chain; its full sequence is Gag-Pro-Pol polyprotein (1772 aa).

A lipid anchor (N-myristoyl glycine; by host) is attached at Gly2. A propeptide spanning residues 101–162 (AAVAQTEEIL…TKKPKRFPVL (62 aa)) is cleaved from the precursor. The span at 113-126 (SSHTELTTKPSQNP) shows a compositional bias: polar residues. Residues 113-149 (SSHTELTTKPSQNPDLDLISLDSDDEGAKGSSLKDKN) are disordered. Residues 138 to 149 (EGAKGSSLKDKN) show a composition bias toward basic and acidic residues. The PPXY motif motif lies at 203–206 (PPPY). Residues 211 to 214 (PSAP) carry the PTAP/PSAP motif motif. A coiled-coil region spans residues 217–258 (MAVVNPKEELKEKIAQLEEQIKLEELHQALISKLQKLKTGNE). Positions 258–282 (ETVTSPETAGGFSRTPHWPGQHIPK) are disordered. A CCHC-type zinc finger spans residues 548–565 (GCCFKCGRKGHFAKNCHE). The segment at 593–626 (KSKTDSQGNPLPPHQGNRTEGPAPGPETSLWGGQ) is disordered. Positions 781–857 (FTGLIDTGAD…LPVNLWGRDL (77 aa)) constitute a Peptidase A2 domain. The active-site Protease; shared with dimeric partner is the Asp786. One can recognise a G-patch domain in the interval 868–914 (PSDIVTAQMLAQGYSPGKGLGKNENGILHPIPNQGQFDKKGFGNFLT). The 189-residue stretch at 960-1148 (LEAGHITESN…DPYTYLGFEL (189 aa)) folds into the Reverse transcriptase domain. Residues Asp1025, Asp1100, Asp1101, Asp1371, Glu1400, Asp1421, and Asp1485 each coordinate Mg(2+). In terms of domain architecture, RNase H type-1 spans 1362–1493 (LNNALLVFTD…ADLATKTVAS (132 aa)). An Integrase-type zinc finger spans residues 1497-1538 (TNLESAQNAHTLHHLNAQTLKLMFNIPREQARQIVRQCPICA). Zn(2+)-binding residues include His1506, His1510, Cys1534, and Cys1537. Residues 1551–1720 (RGLLPNMIWQ…NPRKQFAMVK (170 aa)) enclose the Integrase catalytic domain. Mg(2+) contacts are provided by Asp1562, Asp1619, and Glu1655. Positions 1717-1766 (AMVKWKDPLDNTWPWPDPVIIWGRGSVCVYSQTHDAARWLPERLVKQIPN) form a DNA-binding region, integrase-type.

This sequence belongs to the retroviral Pol polyprotein family. Homodimer. In terms of assembly, interacts with the G-patch peptide. As to quaternary structure, interacts with the reverse transcriptase/ribonuclease H. Homotrimer. The cofactor is Mg(2+). Post-translationally, released by autocatalytic processing. The protease can undergo further autoprocessing to yield 2 shorter but enzymatically active forms of 12 kDa and 13 kDa. In terms of processing, myristoylated. Myristoylation of the matrix (MA) domain mediates the transport and binding of Gag polyproteins to the host plasma membrane and is required for the assembly of viral particles. Specific enzymatic cleavages in vivo yield mature proteins.

It localises to the virion. The enzyme catalyses DNA(n) + a 2'-deoxyribonucleoside 5'-triphosphate = DNA(n+1) + diphosphate. It carries out the reaction Endonucleolytic cleavage to 5'-phosphomonoester.. The catalysed reaction is dUTP + H2O = dUMP + diphosphate + H(+). In terms of biological role, matrix protein. Its function is as follows. Nucleocapsid protein p14: Nucleocapsid protein. Capsid protein. Functionally, the aspartyl protease mediates proteolytic cleavages of Gag and Gag-Pol polyproteins during or shortly after the release of the virion from the plasma membrane. Cleavages take place as an ordered, step-wise cascade to yield mature proteins. This process is called maturation. Displays maximal activity during the budding process just prior to particle release from the cell. In terms of biological role, enhances the activity of the reverse transcriptase. May be part of the mature RT. Its function is as follows. RT is a multifunctional enzyme that converts the viral dimeric RNA genome into dsDNA in the cytoplasm, shortly after virus entry into the cell. This enzyme displays a DNA polymerase activity that can copy either DNA or RNA templates, and a ribonuclease H (RNase H) activity that cleaves the RNA strand of RNA-DNA heteroduplexes in a partially processive 3' to 5' endonucleasic mode. Conversion of viral genomic RNA into dsDNA requires many steps. A tRNA binds to the primer-binding site (PBS) situated at the 5' end of the viral RNA. RT uses the 3' end of the tRNA primer to perfom a short round of RNA-dependent minus-strand DNA synthesis. The reading proceeds through the U5 region and ends after the repeated (R) region which is present at both ends of viral RNA. The portion of the RNA-DNA heteroduplex is digested by the RNase H, resulting in a ssDNA product attached to the tRNA primer. This ssDNA/tRNA hybridizes with the identical R region situated at the 3' end of viral RNA. This template exchange, known as minus-strand DNA strong stop transfer, can be either intra- or intermolecular. RT uses the 3' end of this newly synthesized short ssDNA to perfom the RNA-dependent minus-strand DNA synthesis of the whole template. RNase H digests the RNA template except for a polypurine tract (PPT) situated at the 5' end of the genome. It is not clear if both polymerase and RNase H activities are simultaneous. RNase H probably can proceed both in a polymerase-dependent (RNA cut into small fragments by the same RT performing DNA synthesis) and a polymerase-independent mode (cleavage of remaining RNA fragments by free RTs). Secondly, RT performs DNA-directed plus-strand DNA synthesis using the PPT that has not been removed by RNase H as primers. PPT and tRNA primers are then removed by RNase H. The 3' and 5' ssDNA PBS regions hybridize to form a circular dsDNA intermediate. Strand displacement synthesis by RT to the PBS and PPT ends produces a blunt ended, linear dsDNA copy of the viral genome that includes long terminal repeats (LTRs) at both ends. Catalyzes viral DNA integration into the host chromosome, by performing a series of DNA cutting and joining reactions. This Macaca mulatta (Rhesus macaque) protein is Gag-Pro-Pol polyprotein (pol).